Reading from the N-terminus, the 1303-residue chain is DNA-directed RNA polymerase subunit beta (1303 aa).

The protein belongs to the RNA polymerase beta chain family. As to quaternary structure, the RNAP catalytic core consists of 2 alpha, 1 beta, 1 beta' and 1 omega subunit. When a sigma factor is associated with the core the holoenzyme is formed, which can initiate transcription.

It catalyses the reaction RNA(n) + a ribonucleoside 5'-triphosphate = RNA(n+1) + diphosphate. Its function is as follows. DNA-dependent RNA polymerase catalyzes the transcription of DNA into RNA using the four ribonucleoside triphosphates as substrates. This chain is DNA-directed RNA polymerase subunit beta, found in Chlorobaculum tepidum (strain ATCC 49652 / DSM 12025 / NBRC 103806 / TLS) (Chlorobium tepidum).